Consider the following 154-residue polypeptide: Cytochrome c-type biogenesis protein CcmE (154 aa).

At Met-1–Arg-7 the chain is on the cytoplasmic side. Residues Leu-8–Ala-28 traverse the membrane as a helical; Signal-anchor for type II membrane protein segment. At Phe-29–Pro-154 the chain is on the periplasmic side. Residues His-121 and Tyr-125 each coordinate heme. Residues Ala-131 to Pro-154 form a disordered region.

The protein belongs to the CcmE/CycJ family.

The protein localises to the cell inner membrane. Functionally, heme chaperone required for the biogenesis of c-type cytochromes. Transiently binds heme delivered by CcmC and transfers the heme to apo-cytochromes in a process facilitated by CcmF and CcmH. The chain is Cytochrome c-type biogenesis protein CcmE from Methylibium petroleiphilum (strain ATCC BAA-1232 / LMG 22953 / PM1).